The sequence spans 741 residues: Linoleate 9S-lipoxygenase (741 aa).

A PLAT domain is found at 1–53 (IPGAFYIKNFMQVEFYLKSLTLEDIPNHGTIHFICNSWIYNSKVYKSDRIFFA). Residues 56–741 (TYLPSETPAP…SEEGLTFRGI (686 aa)) form the Lipoxygenase domain. A disordered region spans residues 108–144 (ALARPVLGGSTLPYPRRGRTGRPKTKKDPNSEKPSDF). Basic residues predominate over residues 123 to 132 (RRGRTGRPKT). The segment covering 133–144 (KKDPNSEKPSDF) has biased composition (basic and acidic residues). Fe cation contacts are provided by His407, His412, His598, and Asn602.

Belongs to the lipoxygenase family. As to quaternary structure, monomer. It depends on Fe cation as a cofactor.

The protein resides in the cytoplasm. It carries out the reaction (9Z,12Z)-octadecadienoate + O2 = (9S)-hydroperoxy-(10E,12Z)-octadecadienoate. It catalyses the reaction (9Z,12Z)-octadecadienoate + O2 = (13S)-hydroperoxy-(9Z,11E)-octadecadienoate. The catalysed reaction is (9Z,12Z,15Z)-octadecatrienoate + O2 = (13S)-hydroperoxy-(9Z,11E,15Z)-octadecatrienoate. It participates in lipid metabolism; oxylipin biosynthesis. In terms of biological role, plant lipoxygenase may be involved in a number of diverse aspects of plant physiology including growth and development, pest resistance, and senescence or responses to wounding. It catalyzes the hydroperoxidation of lipids containing a cis,cis-1,4-pentadiene structure. The sequence is that of Linoleate 9S-lipoxygenase from Phaseolus vulgaris (Kidney bean).